The primary structure comprises 234 residues: Large ribosomal subunit protein uL1 (234 aa).

The protein belongs to the universal ribosomal protein uL1 family. As to quaternary structure, part of the 50S ribosomal subunit.

Its function is as follows. Binds directly to 23S rRNA. The L1 stalk is quite mobile in the ribosome, and is involved in E site tRNA release. Functionally, protein L1 is also a translational repressor protein, it controls the translation of the L11 operon by binding to its mRNA. This is Large ribosomal subunit protein uL1 from Yersinia pseudotuberculosis serotype O:1b (strain IP 31758).